The following is a 354-amino-acid chain: Tribbles homolog 3 (354 aa).

The segment at 1–127 (MRATPLAASA…QHVARPTEVL (127 aa)) is interaction with DDIT3/CHOP. Residues 36–61 (RDEPEPGPLPSLLPPSPPPASDLSPA) form a disordered region. The segment covering 41–55 (PGPLPSLLPPSPPPA) has biased composition (pro residues). A Protein kinase domain is found at 68 to 315 (LGPYILLERE…ALGILLHPWL (248 aa)). Positions 320-333 (GRVSPPQSDRREMD) are enriched in basic and acidic residues. The interval 320–354 (GRVSPPQSDRREMDQVVPDGPQLEEAEEGEVGLYG) is disordered. Acidic residues predominate over residues 341-354 (QLEEAEEGEVGLYG).

Belongs to the protein kinase superfamily. CAMK Ser/Thr protein kinase family. Tribbles subfamily. As to quaternary structure, interacts with AKT1, AKT2, MAP2K1 and MAP2K7. Interacts with ATF4. Interacts with DDIT3/CHOP and inhibits its interaction with EP300/P300. Interacts with APOBEC3C. Interacts (via N-terminus) with APOBEC3A. Interacts with RELA. In terms of tissue distribution, highly expressed in liver. Not detected in heart, brain, spleen, lung, skeletal muscle, kidney or testis.

It is found in the nucleus. Inactive protein kinase which acts as a regulator of the integrated stress response (ISR), a process for adaptation to various stress. Inhibits the transcriptional activity of DDIT3/CHOP and is involved in DDIT3/CHOP-dependent cell death during ER stress. May play a role in programmed neuronal cell death but does not appear to affect non-neuronal cells. Acts as a negative feedback regulator of the ATF4-dependent transcription during the ISR: while TRIB3 expression is promoted by ATF4, TRIB3 protein interacts with ATF4 and inhibits ATF4 transcription activity. Disrupts insulin signaling by binding directly to Akt kinases and blocking their activation. May bind directly to and mask the 'Thr-308' phosphorylation site in AKT1. Interacts with the NF-kappa-B transactivator p65 RELA and inhibits its phosphorylation and thus its transcriptional activation activity. Interacts with MAPK kinases and regulates activation of MAP kinases. Can inhibit APOBEC3A editing of nuclear DNA. The chain is Tribbles homolog 3 (Trib3) from Mus musculus (Mouse).